The primary structure comprises 533 residues: Beta-glucosidase 22 (533 aa).

Positions 1 to 24 are cleaved as a signal peptide; that stretch reads MAVSSSTSTCSSFSLLLLLLLLAA. A glycan (N-linked (GlcNAc...) asparagine) is linked at N41. A beta-D-glucoside-binding positions include Q61, H161, and 206–207; that span reads DE. E207 serves as the catalytic Proton donor. A disulfide bond links C226 and C234. 2 N-linked (GlcNAc...) asparagine glycosylation sites follow: N233 and N238. Residues Y350 and E421 each coordinate a beta-D-glucoside. E421 functions as the Nucleophile in the catalytic mechanism. N-linked (GlcNAc...) asparagine glycosylation is present at N435. A beta-D-glucoside is bound by residues W466 and F482.

It belongs to the glycosyl hydrolase 1 family.

The enzyme catalyses Hydrolysis of terminal, non-reducing beta-D-glucosyl residues with release of beta-D-glucose.. The polypeptide is Beta-glucosidase 22 (BGLU22) (Oryza sativa subsp. japonica (Rice)).